The chain runs to 286 residues: Bifunctional protein FolD (286 aa).

NADP(+) contacts are provided by residues 166–168 (GRS), Ser-191, and Ile-232.

The protein belongs to the tetrahydrofolate dehydrogenase/cyclohydrolase family. As to quaternary structure, homodimer.

The enzyme catalyses (6R)-5,10-methylene-5,6,7,8-tetrahydrofolate + NADP(+) = (6R)-5,10-methenyltetrahydrofolate + NADPH. It carries out the reaction (6R)-5,10-methenyltetrahydrofolate + H2O = (6R)-10-formyltetrahydrofolate + H(+). Its pathway is one-carbon metabolism; tetrahydrofolate interconversion. In terms of biological role, catalyzes the oxidation of 5,10-methylenetetrahydrofolate to 5,10-methenyltetrahydrofolate and then the hydrolysis of 5,10-methenyltetrahydrofolate to 10-formyltetrahydrofolate. This Herpetosiphon aurantiacus (strain ATCC 23779 / DSM 785 / 114-95) protein is Bifunctional protein FolD.